Reading from the N-terminus, the 58-residue chain is Ribosome modulation factor (58 aa).

Over residues 1 to 14 (MKRQKRDKLTRAHS) the composition is skewed to basic residues. Positions 1–25 (MKRQKRDKLTRAHSKGYQAGISGRS) are disordered.

The protein belongs to the ribosome modulation factor family.

It localises to the cytoplasm. In terms of biological role, during stationary phase, converts 70S ribosomes to an inactive dimeric form (100S ribosomes). In Alteromonas naphthalenivorans, this protein is Ribosome modulation factor.